The chain runs to 307 residues: Delta-9 acyl-lipid desaturase 2 (307 aa).

The segment covering 1 to 17 (MSVTSTVEENHQKNPST) has biased composition (polar residues). The disordered stretch occupies residues 1 to 21 (MSVTSTVEENHQKNPSTPAAV). Residues 53 to 73 (LALLAPFYFTWSALWVTFLFY) form a helical membrane-spanning segment. H85 and H90 together coordinate Fe cation. Positions 85-90 (HRNLAH) match the Histidine box-1 motif. The helical transmembrane segment at 99-119 (LEYLLAYCALLAIQGDPIDWV) threads the bilayer. Residues H122, H125, and H126 each contribute to the Fe cation site. The Histidine box-2 signature appears at 122–126 (HRYHH). The next 2 helical transmembrane spans lie at 182–202 (VLFH…MSFV) and 204–224 (WGMG…NSLC). Residues H225, H254, H257, and H258 each contribute to the Fe cation site. Residues 254 to 258 (HNNHH) carry the Histidine box-3 motif.

The protein belongs to the fatty acid desaturase type 1 family. Fe cation is required as a cofactor. Strongly expressed in flowers, roots, leaves, seedpods, and inflorescence meristems.

The protein resides in the endoplasmic reticulum membrane. It catalyses the reaction a 1-hexacosanoyl-2-acyl-phosphoglycerolipid + 2 Fe(II)-[cytochrome b5] + O2 + 2 H(+) = a 1-[(17Z)-hexacos-17-enoyl]-2-acyl-phosphoglycerolipid + 2 Fe(III)-[cytochrome b5] + 2 H2O. It carries out the reaction a 1-tetracosanoyl-2-acyl-phosphoglycerolipid + 2 Fe(II)-[cytochrome b5] + O2 + 2 H(+) = a 1-[(15Z)-tetracos-15-enoyl]-2-acyl-phosphoglycerolipid + 2 Fe(III)-[cytochrome b5] + 2 H2O. It functions in the pathway lipid metabolism; polyunsaturated fatty acid biosynthesis. In terms of biological role, involved in delta-9 desaturation of fatty acids. Plays a role in the production of very-long-chain monounsaturated fatty acids (VLCMUFAs) in seed lipids and in membrane phospholipids and sphingolipids. Acts as C-16:0 desaturase for monogalactosyl diacylglycerol (MGDG) and phosphatidylglycerol (PG). Is an essential component for cold adaptation. Is essential to adjust the acyl composition of organelle membrane lipid composition in response to cold stress. This is Delta-9 acyl-lipid desaturase 2 from Arabidopsis thaliana (Mouse-ear cress).